A 221-amino-acid chain; its full sequence is Ribonuclease T (221 aa).

The region spanning 20–194 (VVIDVETAGF…YDTERTAELF (175 aa)) is the Exonuclease domain. Mg(2+) is bound by residues Asp-23, Glu-25, His-181, and Asp-186. Catalysis depends on His-181, which acts as the Proton donor/acceptor.

Belongs to the RNase T family. Homodimer. Requires Mg(2+) as cofactor.

Functionally, trims short 3' overhangs of a variety of RNA species, leaving a one or two nucleotide 3' overhang. Responsible for the end-turnover of tRNA: specifically removes the terminal AMP residue from uncharged tRNA (tRNA-C-C-A). Also appears to be involved in tRNA biosynthesis. This is Ribonuclease T from Shewanella frigidimarina (strain NCIMB 400).